Reading from the N-terminus, the 230-residue chain is Protein FAM3A (230 aa).

The N-terminal stretch at 1 to 33 (MRLAGPLRIVALVVSVGLTWIVVSILLGGPGSG) is a signal peptide. Disulfide bonds link C59/C87 and C65/C222. Residues 68 to 226 (EHLAFRVVSG…LEMEGCIPRR (159 aa)) enclose the GG-type lectin domain.

The protein belongs to the FAM3 family.

The protein resides in the secreted. This chain is Protein FAM3A (FAM3A), found in Pongo abelii (Sumatran orangutan).